A 562-amino-acid chain; its full sequence is Adenylate kinase isoenzyme 5 (562 aa).

Adenylate kinase regions lie at residues 133–316 (KIIL…VAVD) and 377–559 (KIIF…TAID). 142 to 147 (GSGKGT) serves as a coordination point for ATP. The segment at 162–193 (SVGELLRKKIHSASSNRKWSLIAKIITNGELA) is NMP 1. AMP contacts are provided by residues arginine 168, 191-193 (ELA), 219-222 (GFPR), and glutamine 226. Residues 256–266 (KRAEQQGRPDD) form an LID 1 region. Residue arginine 257 coordinates ATP. The AMP site is built by arginine 263 and arginine 274. 386 to 391 (GSGKGT) is an ATP binding site. The tract at residues 406–435 (STGELLRQELTSESERSKLIRDIMERGDLV) is NMP 2. AMP-binding positions include threonine 407, arginine 412, 433-435 (DLV), 462-465 (GYPR), and glutamine 469. The interval 499 to 509 (QRSQSSQRGED) is LID 2. Position 500 (arginine 500) interacts with ATP. 2 residues coordinate AMP: arginine 506 and arginine 517. Glycine 545 lines the ATP pocket.

This sequence belongs to the adenylate kinase family. In terms of assembly, monomer. Interacts with YWHAZ. In terms of tissue distribution, brain specific.

Its subcellular location is the cytoplasm. The enzyme catalyses AMP + ATP = 2 ADP. The catalysed reaction is a 2'-deoxyribonucleoside 5'-diphosphate + ATP = a 2'-deoxyribonucleoside 5'-triphosphate + ADP. It carries out the reaction a ribonucleoside 5'-diphosphate + ATP = a ribonucleoside 5'-triphosphate + ADP. Functionally, nucleoside monophosphate (NMP) kinase that catalyzes the reversible transfer of the terminal phosphate group between nucleoside triphosphates and monophosphates. Active on AMP and dAMP with ATP as a donor. When GTP is used as phosphate donor, the enzyme phosphorylates AMP, CMP, and to a small extent dCMP. Also displays broad nucleoside diphosphate kinase activity. The sequence is that of Adenylate kinase isoenzyme 5 (Ak5) from Mus musculus (Mouse).